The sequence spans 181 residues: Adenylate kinase (181 aa).

ATP is bound at residue 10 to 15; that stretch reads GAGKGT. The NMP stretch occupies residues 30 to 59; it reads STGDLFRANIGEGTPLGKEAKSYIDAGKLV. Residues T31, R36, 57–59, 85–88, and Q92 each bind AMP; these read KLV and GFPR. The LID stretch occupies residues 126–132; the sequence is ARGRADD. R127 is an ATP binding site. The AMP site is built by R129 and R140. Position 166 (G166) interacts with ATP.

The protein belongs to the adenylate kinase family. In terms of assembly, monomer.

The protein resides in the cytoplasm. The catalysed reaction is AMP + ATP = 2 ADP. The protein operates within purine metabolism; AMP biosynthesis via salvage pathway; AMP from ADP: step 1/1. Functionally, catalyzes the reversible transfer of the terminal phosphate group between ATP and AMP. Plays an important role in cellular energy homeostasis and in adenine nucleotide metabolism. The chain is Adenylate kinase from Corynebacterium diphtheriae (strain ATCC 700971 / NCTC 13129 / Biotype gravis).